We begin with the raw amino-acid sequence, 341 residues long: tRNA-specific 2-thiouridylase MnmA (341 aa).

ATP contacts are provided by residues 8 to 15 (GMSGGVDS) and M34. The active-site Nucleophile is the C94. An intrachain disulfide couples C94 to C188. G118 contacts ATP. The segment at 136 to 138 (KDQ) is interaction with tRNA. The Cysteine persulfide intermediate role is filled by C188. The interaction with tRNA stretch occupies residues 290-291 (RY).

Belongs to the MnmA/TRMU family.

The protein localises to the cytoplasm. The catalysed reaction is S-sulfanyl-L-cysteinyl-[protein] + uridine(34) in tRNA + AH2 + ATP = 2-thiouridine(34) in tRNA + L-cysteinyl-[protein] + A + AMP + diphosphate + H(+). In terms of biological role, catalyzes the 2-thiolation of uridine at the wobble position (U34) of tRNA, leading to the formation of s(2)U34. The polypeptide is tRNA-specific 2-thiouridylase MnmA (Sulfurimonas denitrificans (strain ATCC 33889 / DSM 1251) (Thiomicrospira denitrificans (strain ATCC 33889 / DSM 1251))).